A 502-amino-acid polypeptide reads, in one-letter code: Probable cytosol aminopeptidase (502 aa).

2 residues coordinate Mn(2+): Lys-269 and Asp-274. Lys-281 is a catalytic residue. Asp-292, Asp-351, and Glu-353 together coordinate Mn(2+). Residue Arg-355 is part of the active site.

It belongs to the peptidase M17 family. The cofactor is Mn(2+).

The protein resides in the cytoplasm. It carries out the reaction Release of an N-terminal amino acid, Xaa-|-Yaa-, in which Xaa is preferably Leu, but may be other amino acids including Pro although not Arg or Lys, and Yaa may be Pro. Amino acid amides and methyl esters are also readily hydrolyzed, but rates on arylamides are exceedingly low.. The catalysed reaction is Release of an N-terminal amino acid, preferentially leucine, but not glutamic or aspartic acids.. Functionally, presumably involved in the processing and regular turnover of intracellular proteins. Catalyzes the removal of unsubstituted N-terminal amino acids from various peptides. This is Probable cytosol aminopeptidase from Shewanella denitrificans (strain OS217 / ATCC BAA-1090 / DSM 15013).